Consider the following 229-residue polypeptide: Large ribosomal subunit protein uL1c (229 aa).

The protein belongs to the universal ribosomal protein uL1 family. As to quaternary structure, part of the 50S ribosomal subunit.

It localises to the plastid. The protein resides in the chloroplast. Functionally, binds directly to 23S rRNA. Might be involved in E site tRNA release (Potential). This chain is Large ribosomal subunit protein uL1c (rpl1), found in Pyropia yezoensis (Susabi-nori).